A 236-amino-acid chain; its full sequence is Ribose-5-phosphate isomerase A (236 aa).

Substrate contacts are provided by residues 31–34 (TGST), 88–91 (DGAD), and 101–104 (KGGG). Catalysis depends on Glu110, which acts as the Proton acceptor. A substrate-binding site is contributed by Lys128.

Belongs to the ribose 5-phosphate isomerase family. Homodimer.

It catalyses the reaction aldehydo-D-ribose 5-phosphate = D-ribulose 5-phosphate. The protein operates within carbohydrate degradation; pentose phosphate pathway; D-ribose 5-phosphate from D-ribulose 5-phosphate (non-oxidative stage): step 1/1. Catalyzes the reversible conversion of ribose-5-phosphate to ribulose 5-phosphate. In Thermosynechococcus vestitus (strain NIES-2133 / IAM M-273 / BP-1), this protein is Ribose-5-phosphate isomerase A.